We begin with the raw amino-acid sequence, 61 residues long: Photosystem II reaction center protein K (61 aa).

A propeptide spanning residues 1–24 (MLNIFNLICICFNSALFSSSFLFA) is cleaved from the precursor. The chain crosses the membrane as a helical span at residues 36–56 (IVDFMPVIPVLFFLLAFVWQA).

It belongs to the PsbK family. In terms of assembly, PSII is composed of 1 copy each of membrane proteins PsbA, PsbB, PsbC, PsbD, PsbE, PsbF, PsbH, PsbI, PsbJ, PsbK, PsbL, PsbM, PsbT, PsbX, PsbY, PsbZ, Psb30/Ycf12, at least 3 peripheral proteins of the oxygen-evolving complex and a large number of cofactors. It forms dimeric complexes.

The protein resides in the plastid. The protein localises to the chloroplast thylakoid membrane. In terms of biological role, one of the components of the core complex of photosystem II (PSII). PSII is a light-driven water:plastoquinone oxidoreductase that uses light energy to abstract electrons from H(2)O, generating O(2) and a proton gradient subsequently used for ATP formation. It consists of a core antenna complex that captures photons, and an electron transfer chain that converts photonic excitation into a charge separation. The protein is Photosystem II reaction center protein K of Gossypium barbadense (Sea Island cotton).